A 183-amino-acid chain; its full sequence is (2E)-enoyl-[ACP] glycyltransferase (183 aa).

It belongs to the FcoT family.

The catalysed reaction is a (3R)-3-[(carboxymethyl)amino]fatty acid + holo-[ACP] + H(+) = a (2E)-enoyl-[ACP] + glycine + H2O. It catalyses the reaction (3R)-3-[(carboxylmethyl)amino]decanoate + holo-[ACP] + H(+) = (2E)-decenoyl-[ACP] + glycine + H2O. It carries out the reaction a fatty acyl-CoA + H2O = a fatty acid + CoA + H(+). Functionally, involved in the biosynthesis of a unique class of isonitrile lipopeptides (INLPs) that seem to play a role in metal acquisition. Catalyzes a Michael addition of glycine to the beta-position of an alpha,beta-unsaturated fatty acyl-[ACP], producing a (3R)-3-[(carboxymethyl)amino]fatty acid. Acts on the (2E)-decenoyl moiety loaded on the acyl-carrier protein (ACP) BQ2027_MB0103, forming the product (3R)-3-[(carboxymethyl)amino]decanoate released from the ACP. Displays thioesterase activity with a preference for long chain fatty acyl groups. The protein is (2E)-enoyl-[ACP] glycyltransferase of Mycobacterium bovis (strain ATCC BAA-935 / AF2122/97).